Reading from the N-terminus, the 2890-residue chain is Bifunctional DNA-directed RNA polymerase subunit beta-beta' (2890 aa).

Residues 1 to 1377 (MSKKIPLKNR…DINIFGDDVD (1377 aa)) form a DNA-directed RNA polymerase subunit beta region. The DNA-directed RNA polymerase subunit beta' stretch occupies residues 1384 to 2890 (PIVIKEDDRP…LRTLEDGPKF (1507 aa)). 4 residues coordinate Zn(2+): Cys-1449, Cys-1451, Cys-1465, and Cys-1468. Residues Asp-1849, Asp-1851, and Asp-1853 each coordinate Mg(2+). Positions 2179, 2253, 2260, and 2263 each coordinate Zn(2+).

It in the N-terminal section; belongs to the RNA polymerase beta chain family. The protein in the C-terminal section; belongs to the RNA polymerase beta' chain family. As to quaternary structure, the RNAP catalytic core consists of 2 alpha, 1 beta/beta' and 1 omega subunit. When a sigma factor is associated with the core the holoenzyme is formed, which can initiate transcription. Requires Mg(2+) as cofactor. Zn(2+) serves as cofactor.

The catalysed reaction is RNA(n) + a ribonucleoside 5'-triphosphate = RNA(n+1) + diphosphate. Its function is as follows. DNA-dependent RNA polymerase catalyzes the transcription of DNA into RNA using the four ribonucleoside triphosphates as substrates. The protein is Bifunctional DNA-directed RNA polymerase subunit beta-beta' (rpoBC) of Helicobacter pylori (strain HPAG1).